The chain runs to 231 residues: Phosphatidylserine decarboxylase proenzyme (231 aa).

Serine 188 acts as the Schiff-base intermediate with substrate; via pyruvic acid in catalysis. At serine 188 the chain carries Pyruvic acid (Ser); by autocatalysis.

This sequence belongs to the phosphatidylserine decarboxylase family. PSD-A subfamily. In terms of assembly, heterodimer of a large membrane-associated beta subunit and a small pyruvoyl-containing alpha subunit. The cofactor is pyruvate. In terms of processing, is synthesized initially as an inactive proenzyme. Formation of the active enzyme involves a self-maturation process in which the active site pyruvoyl group is generated from an internal serine residue via an autocatalytic post-translational modification. Two non-identical subunits are generated from the proenzyme in this reaction, and the pyruvate is formed at the N-terminus of the alpha chain, which is derived from the carboxyl end of the proenzyme. The post-translation cleavage follows an unusual pathway, termed non-hydrolytic serinolysis, in which the side chain hydroxyl group of the serine supplies its oxygen atom to form the C-terminus of the beta chain, while the remainder of the serine residue undergoes an oxidative deamination to produce ammonia and the pyruvoyl prosthetic group on the alpha chain.

Its subcellular location is the cell membrane. The catalysed reaction is a 1,2-diacyl-sn-glycero-3-phospho-L-serine + H(+) = a 1,2-diacyl-sn-glycero-3-phosphoethanolamine + CO2. It functions in the pathway phospholipid metabolism; phosphatidylethanolamine biosynthesis; phosphatidylethanolamine from CDP-diacylglycerol: step 2/2. Functionally, catalyzes the formation of phosphatidylethanolamine (PtdEtn) from phosphatidylserine (PtdSer). The polypeptide is Phosphatidylserine decarboxylase proenzyme (Rickettsia rickettsii (strain Iowa)).